A 112-amino-acid polypeptide reads, in one-letter code: ATP-dependent Clp protease adapter protein ClpS (112 aa).

It belongs to the ClpS family. As to quaternary structure, binds to the N-terminal domain of the chaperone ClpA.

Involved in the modulation of the specificity of the ClpAP-mediated ATP-dependent protein degradation. In Rhodococcus jostii (strain RHA1), this protein is ATP-dependent Clp protease adapter protein ClpS.